The sequence spans 84 residues: uncharacterized protein (84 aa).

The region spanning 2–84 is the 2Fe-2S ferredoxin-type domain; it reads ARVTLRITGT…RAKGDIEIEM (83 aa). 4 residues coordinate [2Fe-2S] cluster: Cys37, Cys42, Cys45, and Cys74.

It depends on [2Fe-2S] cluster as a cofactor.

This is an uncharacterized protein from Escherichia coli O6:H1 (strain CFT073 / ATCC 700928 / UPEC).